A 539-amino-acid chain; its full sequence is Probable methionine--tRNA ligase, mitochondrial (539 aa).

The 'HIGH' region signature appears at 28 to 38 (FYVNAAPHLGH). Positions 326 to 330 (KMSKS) match the 'KMSKS' region motif. Position 329 (K329) interacts with ATP.

Belongs to the class-I aminoacyl-tRNA synthetase family.

The protein resides in the mitochondrion matrix. It catalyses the reaction tRNA(Met) + L-methionine + ATP = L-methionyl-tRNA(Met) + AMP + diphosphate. This is Probable methionine--tRNA ligase, mitochondrial from Schizosaccharomyces pombe (strain 972 / ATCC 24843) (Fission yeast).